Consider the following 140-residue polypeptide: GTP-dependent dephospho-CoA kinase (140 aa).

6 residues coordinate GTP: aspartate 21, valine 22, valine 23, aspartate 40, lysine 42, and glutamate 92.

The protein belongs to the GTP-dependent DPCK family.

It carries out the reaction 3'-dephospho-CoA + GTP = GDP + CoA + H(+). The protein operates within cofactor biosynthesis; coenzyme A biosynthesis. Catalyzes the GTP-dependent phosphorylation of the 3'-hydroxyl group of dephosphocoenzyme A to form coenzyme A (CoA). This chain is GTP-dependent dephospho-CoA kinase, found in Pyrobaculum aerophilum (strain ATCC 51768 / DSM 7523 / JCM 9630 / CIP 104966 / NBRC 100827 / IM2).